Reading from the N-terminus, the 205-residue chain is MTTDFLFPKISDCSYVSCYCEENVWKLCEQVKRTRPEELSKCYAVFVSNEGRTVPLWRQKAGRGDDQVVIWDYHVFFIHNPLLNRCLVFDLDTTLPFPTYFHKYVTETFRSDLALRPEHHRFFRVIPADTYLIEFSSDRRHMRRPDGSWIKPPPSYPPILSNSNMHCLGDFICMSAGKGPGSVYSLSEFVQNFYKSPHVMAQNNK.

Active-site residues include Cys-20, His-74, and Asp-90.

The protein belongs to the NTAQ1 family. As to quaternary structure, monomer.

The catalysed reaction is N-terminal L-glutaminyl-[protein] + H2O = N-terminal L-glutamyl-[protein] + NH4(+). Its function is as follows. Mediates the side-chain deamidation of N-terminal glutamine residues to glutamate, an important step in N-end rule pathway of protein degradation. Conversion of the resulting N-terminal glutamine to glutamate renders the protein susceptible to arginylation, polyubiquitination and degradation as specified by the N-end rule. Does not act on substrates with internal or C-terminal glutamine and does not act on non-glutamine residues in any position. This is Protein N-terminal glutamine amidohydrolase (tun) from Drosophila melanogaster (Fruit fly).